We begin with the raw amino-acid sequence, 453 residues long: DNA repair protein RadA (453 aa).

Residues 11–28 form a C4-type zinc finger; that stretch reads CNQCGATAPKWLGQCPGC. 93–100 lines the ATP pocket; that stretch reads GDPGIGKS. The RadA KNRFG motif motif lies at 250–254; it reads KNRFG. The tract at residues 349–453 is lon-protease-like; it reads DVFLSITGGL…TIKDAIRLLL (105 aa).

It belongs to the RecA family. RadA subfamily.

Its function is as follows. DNA-dependent ATPase involved in processing of recombination intermediates, plays a role in repairing DNA breaks. Stimulates the branch migration of RecA-mediated strand transfer reactions, allowing the 3' invading strand to extend heteroduplex DNA faster. Binds ssDNA in the presence of ADP but not other nucleotides, has ATPase activity that is stimulated by ssDNA and various branched DNA structures, but inhibited by SSB. Does not have RecA's homology-searching function. The sequence is that of DNA repair protein RadA from Chlamydia pneumoniae (Chlamydophila pneumoniae).